Here is a 369-residue protein sequence, read N- to C-terminus: Type 2 DNA topoisomerase 6 subunit A (369 aa).

One can recognise a Topo IIA-type catalytic domain in the interval 11–149; sequence QRDLLAREKL…FHMRPEEDGA (139 aa). The active-site O-(5'-phospho-DNA)-tyrosine intermediate is Tyr-106. Mg(2+)-binding residues include Glu-202 and Asp-254.

Belongs to the TOP6A family. As to quaternary structure, homodimer. Heterotetramer of two Top6A and two Top6B chains. Mg(2+) serves as cofactor.

The catalysed reaction is ATP-dependent breakage, passage and rejoining of double-stranded DNA.. Relaxes both positive and negative superturns and exhibits a strong decatenase activity. The sequence is that of Type 2 DNA topoisomerase 6 subunit A from Methanosarcina barkeri (strain Fusaro / DSM 804).